Here is a 125-residue protein sequence, read N- to C-terminus: Large ribosomal subunit protein eL31 (125 aa).

M1 is subject to N-acetylmethionine. S15 bears the Phosphoserine mark. 2 positions are modified to N6-succinyllysine: K55 and K70. Residue K75 is modified to N6-acetyllysine; alternate. N6-succinyllysine; alternate is present on K75. Phosphoserine is present on S98.

The protein belongs to the eukaryotic ribosomal protein eL31 family. As to quaternary structure, component of the large ribosomal subunit.

The protein localises to the cytoplasm. In terms of biological role, component of the large ribosomal subunit. The ribosome is a large ribonucleoprotein complex responsible for the synthesis of proteins in the cell. In Oryctolagus cuniculus (Rabbit), this protein is Large ribosomal subunit protein eL31 (RPL31).